The sequence spans 288 residues: MSICYYDTVGREKRLLIINQRALALPNRTISSDGTCCDGDEYLLVDTFTKLNFKVQTIRNASKIVLETTVRNYIEKNVKRVACYFVVVLNDGNDADTILTTDGTYSLSELYALFTLYTVRAIPKVFLIQSCLGAKIDRSHCDRASCQCDQEEDAHPTSVCHDIFVNTVRRVIHACSRKSNGSTTTTETKCSDVATVVLTSPHTEETIIVYLRIEAYLRYGDTKCGCFMIEKFCKNLIKYGTRSSVHTTITMVQNEMQITDPKHVPIVQMNCTKLLFLGDENHIIMEEY.

Cys131 is an active-site residue.

This sequence belongs to the peptidase C14A family.

Functionally, may induce host cell apoptosis and contribute of the establishment of a special cell cleavage process in which apoppotic bodies are rescued by the virus and differentiate to form large vesicles in which virion assembles. The protein is Executioner caspase of Spodoptera frugiperda ascovirus 1a (SfAV-1a).